Here is a 434-residue protein sequence, read N- to C-terminus: Trigger factor (434 aa).

The PPIase FKBP-type domain maps to 161–246 (EDRVTVDFSG…LKKVEERELP (86 aa)).

Belongs to the FKBP-type PPIase family. Tig subfamily.

The protein localises to the cytoplasm. It carries out the reaction [protein]-peptidylproline (omega=180) = [protein]-peptidylproline (omega=0). In terms of biological role, involved in protein export. Acts as a chaperone by maintaining the newly synthesized protein in an open conformation. Functions as a peptidyl-prolyl cis-trans isomerase. The protein is Trigger factor of Serratia proteamaculans (strain 568).